The chain runs to 242 residues: Segregation and condensation protein A (242 aa).

The protein belongs to the ScpA family. As to quaternary structure, component of a cohesin-like complex composed of ScpA, ScpB and the Smc homodimer, in which ScpA and ScpB bind to the head domain of Smc. The presence of the three proteins is required for the association of the complex with DNA.

It localises to the cytoplasm. Its function is as follows. Participates in chromosomal partition during cell division. May act via the formation of a condensin-like complex containing Smc and ScpB that pull DNA away from mid-cell into both cell halves. This is Segregation and condensation protein A from Streptococcus pneumoniae serotype 19F (strain G54).